Here is a 448-residue protein sequence, read N- to C-terminus: MEAATENQGRILLVDDESAILRTFRYCLEDEGYSVATANSAAQADTLMQRQVFDLCFLDLRLGEDNGLDVLAQMRIQAPWMRVVIVTAHSAVDTAVDAIQAGAADYLVKPCSPDQLRLATAKQLEVRQLSARLEALEGEVRKPKDGLDSHSPSMMAILETARQVAVTDANILILGESGTGKGELARAIHGWSKRAKKSCVTINCPSLTAELMESELFGHSRGAFTGASESTLGRVNQADGGTLFLDEIGDFPLTLQPKLLRFIQDKEYERVGDPVTRRADVRILAATNLNLEDMVRSGRFREDLLYRLNVITLHLPALRERSEDILTLADRFLARFVKEYARPARGFSEEARAALLNYRWPGNIRELRNVIERASIICPQERVEVSHLGMAEQPANNAPRVGAALSLDELEKAHIGAVLATSETLDQAAKTLGIDASTLYRKRKQYNL.

In terms of domain architecture, Response regulatory spans 10 to 124; it reads RILLVDDESA…QLRLATAKQL (115 aa). At Asp-59 the chain carries 4-aspartylphosphate. Residues 147–376 form the Sigma-54 factor interaction domain; the sequence is LDSHSPSMMA…LRNVIERASI (230 aa). Residues 175 to 182 and 238 to 247 contribute to the ATP site; these read GESGTGKG and ADGGTLFLDE. A DNA-binding region (H-T-H motif) is located at residues 425–444; it reads LDQAAKTLGIDASTLYRKRK.

Its pathway is glycan biosynthesis; alginate biosynthesis [regulation]. Positive regulator of the alginate biosynthetic gene algD. This is Alginate biosynthesis transcriptional regulatory protein AlgB (algB) from Pseudomonas syringae pv. tomato (strain ATCC BAA-871 / DC3000).